A 989-amino-acid chain; its full sequence is Translation initiation factor IF-2 (989 aa).

Disordered regions lie at residues 28-60 (GVTK…TDAD) and 97-397 (VRRD…DQNT). 2 stretches are compositionally biased toward basic and acidic residues: residues 40–60 (ETDK…TDAD) and 122–178 (ELQR…EAAK). Residues 182–223 (AAAAEAAAREQQTQASKPAQAAQPAAAKAEPVAAKAAEPVVA) show a composition bias toward low complexity. The span at 231–280 (ERAAAERAAQREAAKKAEDAARQAAEKARAEQEEIAKRRAAAEAEARAIR) shows a compositional bias: basic and acidic residues. Residues 318–345 (RPAGEAPARPAAKKPAAAAPAATTTPSA) show a composition bias toward low complexity. Residues 374-387 (TSGGVDRGWRGGPK) are compositionally biased toward gly residues. Positions 489 to 658 (PRPPVVTVMG…LLQAEVLELK (170 aa)) constitute a tr-type G domain. A G1 region spans residues 498 to 505 (GHVDHGKT). Residue 498–505 (GHVDHGKT) participates in GTP binding. The G2 stretch occupies residues 523–527 (GITQH). Residues 544–547 (DTPG) are G3. GTP is bound by residues 544–548 (DTPGH) and 598–601 (NKID). Positions 598-601 (NKID) are G4. The tract at residues 634–636 (SAK) is G5.

This sequence belongs to the TRAFAC class translation factor GTPase superfamily. Classic translation factor GTPase family. IF-2 subfamily.

The protein localises to the cytoplasm. Functionally, one of the essential components for the initiation of protein synthesis. Protects formylmethionyl-tRNA from spontaneous hydrolysis and promotes its binding to the 30S ribosomal subunits. Also involved in the hydrolysis of GTP during the formation of the 70S ribosomal complex. This is Translation initiation factor IF-2 from Paraburkholderia xenovorans (strain LB400).